The following is a 340-amino-acid chain: HTH-type transcriptional repressor PurR (340 aa).

Residues 2–56 (ATIKDVAKLVGVSTTTVSHVINKTRFVAEDTTKAVWEAIASLNYSPSAVARSLKV) enclose the HTH lacI-type domain. Residues 4 to 23 (IKDVAKLVGVSTTTVSHVIN) constitute a DNA-binding region (H-T-H motif). The DNA-binding element occupies 48–56 (SAVARSLKV). Tyr-73, Lys-188, Thr-190, Phe-219, and Asp-273 together coordinate hypoxanthine.

Homodimer.

Its pathway is purine metabolism; purine nucleotide biosynthesis [regulation]. Is the main repressor of the genes involved in the de novo synthesis of purine nucleotides, regulating purB, purC, purEK, purF, purHD, purL, purMN and guaBA expression. PurR is allosterically activated to bind its cognate DNA by binding the purine corepressors, hypoxanthine or guanine, thereby effecting transcription repression. In Glaesserella parasuis serovar 5 (strain SH0165) (Haemophilus parasuis), this protein is HTH-type transcriptional repressor PurR.